Reading from the N-terminus, the 367-residue chain is RYamide receptor (367 aa).

At 1-35 (MDANTTRNESFSLDCELVNPNSTLANVYFLSAVYS) the chain is on the extracellular side. 3 N-linked (GlcNAc...) asparagine glycosylation sites follow: Asn-4, Asn-8, and Asn-21. Residues 36–56 (MYAIIFVVALIGNSFVCYIVL) traverse the membrane as a helical segment. Topologically, residues 57-66 (SSPPMRTVTN) are cytoplasmic. A helical transmembrane segment spans residues 67–87 (FFILNLAIGDVLITLLCVPFT). Over 88 to 113 (SVSLLMQYWPFGGILCPVVNYSQALS) the chain is Extracellular. Asn-107 carries an N-linked (GlcNAc...) asparagine glycan. The chain crosses the membrane as a helical span at residues 114–134 (VFVSAYTLVAISIDKYMIIMW). Residues 135 to 143 (PLKPRISKR) are Cytoplasmic-facing. Residues 144–164 (FATYIIALVWLIAGITVLPSA) form a helical membrane-spanning segment. The Extracellular portion of the chain corresponds to 165–212 (TFTTLINDENILGTSAYEQCDKYICAEEYSKVGQEYGDLYTKVLMFLQ). A helical membrane pass occupies residues 213 to 233 (YVIPSLVLLFTYTSIGVVIWC). Over 234–258 (HRIPGEAENSRDQRIAKNKTKMIKM) the chain is Cytoplasmic. A helical membrane pass occupies residues 259 to 279 (MVTVVCVYTICWLPYNVLMIF). The Extracellular segment spans residues 280 to 282 (KEH). The helical transmembrane segment at 283-303 (ISGSVMVYLYFPLHGLAMSHA) threads the bilayer. The Cytoplasmic segment spans residues 304–367 (CYNPIIYCYM…EITRAQPTSA (64 aa)).

The protein belongs to the G-protein coupled receptor 1 family.

The protein resides in the cell membrane. Receptor for the neuropeptides RYamide-1 and RYamide-2. The activity of this receptor is mediated by G proteins which activate a phosphatidyl-inositol-calcium second messenger system. RYamide-2 is the most potent activator. In Tribolium castaneum (Red flour beetle), this protein is RYamide receptor.